The primary structure comprises 371 residues: Galanin receptor type 2 (371 aa).

Topologically, residues 1–27 are extracellular; the sequence is MNGSDSQGAEDSSQEGGGGWQPEAVLV. An N-linked (GlcNAc...) asparagine glycan is attached at asparagine 2. The helical transmembrane segment at 28–48 threads the bilayer; that stretch reads PLFFALIFLVGAVGNALVLAV. Over 49–59 the chain is Cytoplasmic; it reads LLRGGQAVSTT. A helical transmembrane segment spans residues 60–80; it reads NLFILNLGVADLCFILCCVPF. The Extracellular portion of the chain corresponds to 81 to 98; the sequence is QATIYTLDDWVFGSLLCK. A disulfide bridge links cysteine 97 with cysteine 174. The helical transmembrane segment at 99 to 120 threads the bilayer; the sequence is AVHFLIFLTMHASSFTLAAVSL. Residues 121-140 lie on the Cytoplasmic side of the membrane; sequence DRYLAIRYPLHSRELRTPRN. The chain crosses the membrane as a helical span at residues 141–161; it reads ALAAIGLIWGLALLFSGPYLS. Residues 162-186 are Extracellular-facing; sequence YYSQSQLANLTVCHPAWSAPRRRAM. The chain crosses the membrane as a helical span at residues 187–207; it reads DLCTFVFSYLLPVLVLSLTYA. Residues 208–236 lie on the Cytoplasmic side of the membrane; the sequence is RTLHYLWRTVDPVAAGSGSQRAKRKVTRM. The chain crosses the membrane as a helical span at residues 237-257; the sequence is IVIVAVLFCLCWMPHHALILC. At 258–259 the chain is on the extracellular side; that stretch reads VW. A helical membrane pass occupies residues 260–280; that stretch reads FGRFPLTRATYALRILSHLVS. Residues 281-371 are Cytoplasmic-facing; the sequence is YANSCVNPIV…TLSRTLDPAC (91 aa).

Belongs to the G-protein coupled receptor 1 family.

It is found in the cell membrane. Receptor for the hormone galanin, GALP and spexin-1. The activity of this receptor is mediated by G proteins that activate the phospholipase C/protein kinase C pathway (via G(q)) and that inhibit adenylyl cyclase (via G(i)). The protein is Galanin receptor type 2 (Galr2) of Mus musculus (Mouse).